The following is a 177-amino-acid chain: Large ribosomal subunit protein uL6 (177 aa).

The span at 157 to 171 (YKGKGVRYSDENVRR) shows a compositional bias: basic and acidic residues. Residues 157–177 (YKGKGVRYSDENVRRKEAKKK) form a disordered region.

The protein belongs to the universal ribosomal protein uL6 family. Part of the 50S ribosomal subunit.

In terms of biological role, this protein binds to the 23S rRNA, and is important in its secondary structure. It is located near the subunit interface in the base of the L7/L12 stalk, and near the tRNA binding site of the peptidyltransferase center. In Pseudoalteromonas translucida (strain TAC 125), this protein is Large ribosomal subunit protein uL6.